Consider the following 128-residue polypeptide: Large ribosomal subunit protein bL19 (128 aa).

Belongs to the bacterial ribosomal protein bL19 family.

Its function is as follows. This protein is located at the 30S-50S ribosomal subunit interface and may play a role in the structure and function of the aminoacyl-tRNA binding site. This chain is Large ribosomal subunit protein bL19, found in Ralstonia nicotianae (strain ATCC BAA-1114 / GMI1000) (Ralstonia solanacearum).